The following is a 181-amino-acid chain: Large ribosomal subunit protein uL5 (181 aa).

Belongs to the universal ribosomal protein uL5 family. In terms of assembly, part of the 50S ribosomal subunit; part of the 5S rRNA/L5/L18/L25 subcomplex. Contacts the 5S rRNA and the P site tRNA. Forms a bridge to the 30S subunit in the 70S ribosome.

In terms of biological role, this is one of the proteins that bind and probably mediate the attachment of the 5S RNA into the large ribosomal subunit, where it forms part of the central protuberance. In the 70S ribosome it contacts protein S13 of the 30S subunit (bridge B1b), connecting the 2 subunits; this bridge is implicated in subunit movement. Contacts the P site tRNA; the 5S rRNA and some of its associated proteins might help stabilize positioning of ribosome-bound tRNAs. The chain is Large ribosomal subunit protein uL5 from Helicobacter pylori (strain J99 / ATCC 700824) (Campylobacter pylori J99).